The primary structure comprises 228 residues: Urease subunit gamma/beta (228 aa).

The urease gamma stretch occupies residues 1-101 (MQLTERERDK…LVTVHDPIRG (101 aa)). Positions 102-228 (AASRRVAGEY…ARAAGFGGAQ (127 aa)) are urease beta.

The protein in the N-terminal section; belongs to the urease gamma subunit family. In the C-terminal section; belongs to the urease beta subunit family. Heterohexamer of 3 UreC (alpha) and 3 UreAB (gamma/beta) subunits.

The protein localises to the cytoplasm. The catalysed reaction is urea + 2 H2O + H(+) = hydrogencarbonate + 2 NH4(+). It functions in the pathway nitrogen metabolism; urea degradation; CO(2) and NH(3) from urea (urease route): step 1/1. The protein is Urease subunit gamma/beta of Deinococcus radiodurans (strain ATCC 13939 / DSM 20539 / JCM 16871 / CCUG 27074 / LMG 4051 / NBRC 15346 / NCIMB 9279 / VKM B-1422 / R1).